Reading from the N-terminus, the 442-residue chain is Glutamyl-tRNA reductase (442 aa).

Residues 50-53 (TCNR), serine 109, 114-116 (EPQ), and glutamine 120 contribute to the substrate site. Catalysis depends on cysteine 51, which acts as the Nucleophile. Position 189-194 (189-194 (GAGEMA)) interacts with NADP(+).

It belongs to the glutamyl-tRNA reductase family. As to quaternary structure, homodimer.

It catalyses the reaction (S)-4-amino-5-oxopentanoate + tRNA(Glu) + NADP(+) = L-glutamyl-tRNA(Glu) + NADPH + H(+). The protein operates within porphyrin-containing compound metabolism; protoporphyrin-IX biosynthesis; 5-aminolevulinate from L-glutamyl-tRNA(Glu): step 1/2. Catalyzes the NADPH-dependent reduction of glutamyl-tRNA(Glu) to glutamate 1-semialdehyde (GSA). The protein is Glutamyl-tRNA reductase of Nitratidesulfovibrio vulgaris (strain DSM 19637 / Miyazaki F) (Desulfovibrio vulgaris).